Consider the following 336-residue polypeptide: Large ribosomal subunit protein uL1m (336 aa).

The transit peptide at 1-50 (MAAAVRCLRRVLIHHQRHCLCKMASQASLYPCSVNSLLHNRHFAAAAAAA) directs the protein to the mitochondrion. Ser85 bears the Phosphoserine mark.

Belongs to the universal ribosomal protein uL1 family.

The protein localises to the mitochondrion. This chain is Large ribosomal subunit protein uL1m (Mrpl1), found in Mus musculus (Mouse).